We begin with the raw amino-acid sequence, 361 residues long: F-box protein pof7 (361 aa).

The F-box domain maps to 105-157 (NESVVPNILKLPDEVLLVILENCIRDLHDLRYLSSIALTCKHFAKALRADSLY).

Interacts with skp1.

The protein resides in the cytoplasm. The protein is F-box protein pof7 (pof7) of Schizosaccharomyces pombe (strain 972 / ATCC 24843) (Fission yeast).